The sequence spans 360 residues: E3 ubiquitin-protein ligase HAKAI homolog (360 aa).

The segment covering 1 to 11 (MLQIRLRRDSP) has biased composition (basic and acidic residues). Positions 1–24 (MLQIRLRRDSPTETGNGARPSPTE) are disordered. The RING-type zinc-finger motif lies at 72-107 (CVRCDFPIAIYGRLIPCDHAFCLECARSDSICYLCD). The C2H2-type zinc-finger motif lies at 123–148 (FICAAPHCLRSFLKKLDFEAHVHDLH). The disordered stretch occupies residues 156 to 360 (AEKEDGNQSD…QENRDGFGQE (205 aa)). Composition is skewed to polar residues over residues 163–179 (QSDV…SEST), 186–214 (SQLQ…QNYP), and 270–283 (YPTT…QFFN). Positions 293–304 (ESGGSEQSSLLG) are enriched in low complexity.

The protein belongs to the Hakai family. In terms of assembly, interacts with MTB and VIR. Associates with MTA, MTB, FIP37 and VIR to form the m6A writer complex which is essential for adenosine methylation at specific mRNA sequences.

It is found in the nucleus speckle. Its subcellular location is the nucleus. The protein localises to the nucleoplasm. It catalyses the reaction S-ubiquitinyl-[E2 ubiquitin-conjugating enzyme]-L-cysteine + [acceptor protein]-L-lysine = [E2 ubiquitin-conjugating enzyme]-L-cysteine + N(6)-ubiquitinyl-[acceptor protein]-L-lysine.. Probable E3 ubiquitin-protein ligase which is a subunit of the N6-methyltransferase complex, a multiprotein complex that mediates N6-methyladenosine (m6A) methylation at the 5'-[AG]GAC-3' consensus sites of some mRNAs. Associates with MTA, MTB, FIP37 and VIR to form the m6A writer complex which is essential for adenosine methylation at specific mRNA sequences. N6-methyladenosine (m6A) plays a role in mRNA stability, processing, translation efficiency and editing. The chain is E3 ubiquitin-protein ligase HAKAI homolog from Arabidopsis thaliana (Mouse-ear cress).